The sequence spans 183 residues: Oleosin Bn-V (183 aa).

The interval 1–47 (PARTHHDITTRDQYPLISRDRDQYGMIGRDQYNMSGQNYSKSRQIAK) is polar. 2 repeats span residues 11–20 (RDQYPLISRD) and 21–30 (RDQYGMIGRD). The segment at 48–119 (ATTAVTAGDS…AAITVFSWIY (72 aa)) is hydrophobic. 2 helical membrane passes run 57 to 77 (SLLVLSSLTLVGTVIALIVAT) and 99 to 119 (TGFLSSGAFGIAAITVFSWIY). The interval 154 to 183 (YGQQHTGEEHDRDRDHRTDRDRTRGTQHTT) is disordered. Basic and acidic residues predominate over residues 159 to 177 (TGEEHDRDRDHRTDRDRTR).

Belongs to the oleosin family.

The protein localises to the lipid droplet. The protein resides in the membrane. Its function is as follows. May have a structural role to stabilize the lipid body during desiccation of the seed by preventing coalescence of the oil. Probably interacts with both lipid and phospholipid moieties of lipid bodies. May also provide recognition signals for specific lipase anchorage in lipolysis during seedling growth. The chain is Oleosin Bn-V from Brassica napus (Rape).